Reading from the N-terminus, the 1770-residue chain is Transposon Ty2-C Gag-Pol polyprotein (1770 aa).

3 stretches are compositionally biased toward polar residues: residues 1–11 (MESQQLHQNPR), 19–39 (ASVT…SASN), and 49–60 (KVNSQQETTPGT). 2 disordered regions span residues 1-88 (MESQ…YQQH) and 355-453 (SQYK…LPDH). The tract at residues 295–397 (ENNINVSDRL…SSKPRAAKAH (103 aa)) is RNA-binding. The segment covering 369-382 (TSPNTTNTKVTTRN) has biased composition (low complexity). Polar residues-rich tracts occupy residues 399–408 (IATSSKFSRV) and 415–435 (ESTV…GQQQ). D457 functions as the For protease activity; shared with dimeric partner in the catalytic mechanism. The segment at 579–636 (NVNKSKSVNKYPYPLIHRMLGHANFRSIQKSLKKNAVTYLKESDIEWSNASTYQCPDC) is integrase-type zinc finger-like. One can recognise an Integrase catalytic domain in the interval 656–831 (ESYEPFQYLH…AGLDITTILP (176 aa)). Residues D667 and D732 each coordinate Mg(2+). 2 disordered regions span residues 1003–1038 (EMGG…MIDL) and 1057–1205 (GGTE…TEIE). Composition is skewed to polar residues over residues 1009–1024 (ESDT…FTAR) and 1065–1082 (QRNS…STPS). Residues 1193–1227 (KKRSLEDNETEIEVSRDTWNNKNMRSLEPPRSKKR) carry the Bipartite nuclear localization signal motif. The 139-residue stretch at 1353–1491 (NDYYITQLDI…DILGLEIKYQ (139 aa)) folds into the Reverse transcriptase Ty1/copia-type domain. Residues D1361, D1442, D1443, D1625, E1667, and D1700 each coordinate Mg(2+). The 143-residue stretch at 1625-1767 (DASYGNQPYY…IKTFKLLTNK (143 aa)) folds into the RNase H Ty1/copia-type domain.

As to quaternary structure, the capsid protein forms a homotrimer, from which the VLPs are assembled. The protease is a homodimer, whose active site consists of two apposed aspartic acid residues. Initially, virus-like particles (VLPs) are composed of the structural unprocessed proteins Gag and Gag-Pol, and also contain the host initiator methionine tRNA (tRNA(i)-Met) which serves as a primer for minus-strand DNA synthesis, and a dimer of genomic Ty RNA. Processing of the polyproteins occurs within the particle and proceeds by an ordered pathway, called maturation. First, the protease (PR) is released by autocatalytic cleavage of the Gag-Pol polyprotein, and this cleavage is a prerequisite for subsequent processing at the remaining sites to release the mature structural and catalytic proteins. Maturation takes place prior to the RT reaction and is required to produce transposition-competent VLPs.

The protein localises to the cytoplasm. It is found in the nucleus. It catalyses the reaction DNA(n) + a 2'-deoxyribonucleoside 5'-triphosphate = DNA(n+1) + diphosphate. The catalysed reaction is Endonucleolytic cleavage to 5'-phosphomonoester.. In terms of biological role, capsid protein (CA) is the structural component of the virus-like particle (VLP), forming the shell that encapsulates the retrotransposons dimeric RNA genome. The particles are assembled from trimer-clustered units and there are holes in the capsid shells that allow for the diffusion of macromolecules. CA also has nucleocapsid-like chaperone activity, promoting primer tRNA(i)-Met annealing to the multipartite primer-binding site (PBS), dimerization of Ty2 RNA and initiation of reverse transcription. The aspartyl protease (PR) mediates the proteolytic cleavages of the Gag and Gag-Pol polyproteins after assembly of the VLP. Functionally, reverse transcriptase/ribonuclease H (RT) is a multifunctional enzyme that catalyzes the conversion of the retro-elements RNA genome into dsDNA within the VLP. The enzyme displays a DNA polymerase activity that can copy either DNA or RNA templates, and a ribonuclease H (RNase H) activity that cleaves the RNA strand of RNA-DNA heteroduplexes during plus-strand synthesis and hydrolyzes RNA primers. The conversion leads to a linear dsDNA copy of the retrotransposon that includes long terminal repeats (LTRs) at both ends. Its function is as follows. Integrase (IN) targets the VLP to the nucleus, where a subparticle preintegration complex (PIC) containing at least integrase and the newly synthesized dsDNA copy of the retrotransposon must transit the nuclear membrane. Once in the nucleus, integrase performs the integration of the dsDNA into the host genome. This is Transposon Ty2-C Gag-Pol polyprotein (TY2B-C) from Saccharomyces cerevisiae (strain ATCC 204508 / S288c) (Baker's yeast).